The sequence spans 253 residues: uncharacterized protein (253 aa).

Positions 4-73 (FGKSTADRVK…IDVSGVTVLQ (70 aa)) constitute a BON 1 domain. A compositionally biased stretch (low complexity) spans 79–93 (AAQTAPTTPAQTSPS). The tract at residues 79–105 (AAQTAPTTPAQTSPSVQDSPSTPVQMP) is disordered. The 70-residue stretch at 119–188 (DTSRIAKAVL…VDISGLRVAQ (70 aa)) folds into the BON 2 domain. Positions 204–251 (TVYTVKPGDSLSKIAEHYYGDQMEYKKIAHYNNISNPDLIQPGQKLRI) constitute a LysM domain.

This is an uncharacterized protein from Deinococcus radiodurans (strain ATCC 13939 / DSM 20539 / JCM 16871 / CCUG 27074 / LMG 4051 / NBRC 15346 / NCIMB 9279 / VKM B-1422 / R1).